A 109-amino-acid chain; its full sequence is Avian agnoprotein 2b (109 aa).

Residues 89–109 are disordered; that stretch reads QPALASRLTQPNRPNRGRLAK.

It is found in the host cytoplasm. The protein is Avian agnoprotein 2b of Psittacidae (parrots).